A 225-amino-acid polypeptide reads, in one-letter code: UPF0758 protein NGK_1225 (225 aa).

Residues 102–224 (TLSDPDTVAD…VRSFRQLGLM (123 aa)) enclose the MPN domain. 3 residues coordinate Zn(2+): histidine 173, histidine 175, and aspartate 186. A JAMM motif motif is present at residues 173–186 (HNHPGGSPEPSQED).

It belongs to the UPF0758 family.

The chain is UPF0758 protein NGK_1225 from Neisseria gonorrhoeae (strain NCCP11945).